The sequence spans 1956 residues: Probable cation-transporting ATPase 1 (1956 aa).

The Cytoplasmic segment spans residues M1–I35. Residues L36 to L58 form a helical membrane-spanning segment. At D59 to Y61 the chain is on the extracellular side. A helical membrane pass occupies residues I62–L80. Topologically, residues K81–S407 are cytoplasmic. Residues Y408–Y427 form a helical membrane-spanning segment. Residues I428 to I440 are Extracellular-facing. A helical transmembrane segment spans residues I441 to G462. The Cytoplasmic segment spans residues I463–K1818. The 4-aspartylphosphate intermediate role is filled by D496. Residues Y901–N938 form a disordered region. Residues D907–D935 show a composition bias toward acidic residues. Residues D1760 and D1764 each contribute to the Mg(2+) site. Residues F1819–I1837 form a helical membrane-spanning segment. Over S1838–Q1845 the chain is Extracellular. Residues Y1846–W1863 form a helical membrane-spanning segment. Topologically, residues T1864–S1881 are cytoplasmic. A helical membrane pass occupies residues F1882–V1905. Topologically, residues L1906–Y1928 are extracellular. A helical transmembrane segment spans residues L1929–F1952. The Cytoplasmic portion of the chain corresponds to K1953–E1956.

Belongs to the cation transport ATPase (P-type) (TC 3.A.3) family. Type V subfamily.

The protein resides in the membrane. The catalysed reaction is ATP + H2O = ADP + phosphate + H(+). The sequence is that of Probable cation-transporting ATPase 1 from Plasmodium falciparum.